Here is an 89-residue protein sequence, read N- to C-terminus: Small ribosomal subunit protein uS15 (89 aa).

Belongs to the universal ribosomal protein uS15 family. In terms of assembly, part of the 30S ribosomal subunit. Forms a bridge to the 50S subunit in the 70S ribosome, contacting the 23S rRNA.

In terms of biological role, one of the primary rRNA binding proteins, it binds directly to 16S rRNA where it helps nucleate assembly of the platform of the 30S subunit by binding and bridging several RNA helices of the 16S rRNA. Its function is as follows. Forms an intersubunit bridge (bridge B4) with the 23S rRNA of the 50S subunit in the ribosome. This Shewanella amazonensis (strain ATCC BAA-1098 / SB2B) protein is Small ribosomal subunit protein uS15.